Reading from the N-terminus, the 96-residue chain is ATP synthase subunit f, mitochondrial (96 aa).

This sequence belongs to the ATPase F chain family.

Its subcellular location is the mitochondrion. The protein resides in the mitochondrion inner membrane. Its function is as follows. Mitochondrial membrane ATP synthase (F(1)F(0) ATP synthase or Complex V) produces ATP from ADP in the presence of a proton gradient across the membrane which is generated by electron transport complexes of the respiratory chain. F-type ATPases consist of two structural domains, F(1) - containing the extramembraneous catalytic core and F(0) - containing the membrane proton channel, linked together by a central stalk and a peripheral stalk. During catalysis, ATP synthesis in the catalytic domain of F(1) is coupled via a rotary mechanism of the central stalk subunits to proton translocation. This Schizosaccharomyces pombe (strain 972 / ATCC 24843) (Fission yeast) protein is ATP synthase subunit f, mitochondrial (atp17).